The following is a 36-amino-acid chain: Potassium channel toxin alpha-KTx 16.9 (36 aa).

3 disulfide bridges follow: C7-C28, C13-C33, and C17-C35.

The protein belongs to the short scorpion toxin superfamily. Potassium channel inhibitor family. Alpha-KTx 16 subfamily. In terms of tissue distribution, expressed by the venom gland.

Its subcellular location is the secreted. Its function is as follows. Poorly competes with (125)I-kaliotoxin binding on rat brain synaptosome (IC(50)&gt;100 nM). Is a poor Kv1.3/KCNA3 ligand. May have as real target KCa1.1/KCNMA1 channel. Shows weak toxicity on mice. This is Potassium channel toxin alpha-KTx 16.9 from Buthus paris (Scorpion).